Reading from the N-terminus, the 444-residue chain is Xaa-Pro dipeptidase (444 aa).

D247, D258, H340, E385, and E424 together coordinate Mn(2+).

This sequence belongs to the peptidase M24B family. Bacterial-type prolidase subfamily. Mn(2+) is required as a cofactor.

The catalysed reaction is Xaa-L-Pro dipeptide + H2O = an L-alpha-amino acid + L-proline. In terms of biological role, splits dipeptides with a prolyl residue in the C-terminal position. This is Xaa-Pro dipeptidase from Photorhabdus laumondii subsp. laumondii (strain DSM 15139 / CIP 105565 / TT01) (Photorhabdus luminescens subsp. laumondii).